Reading from the N-terminus, the 115-residue chain is U3-lycotoxin-Ls1q (115 aa).

The signal sequence occupies residues Met1 to Ala20. Positions Glu21–Arg44 are excised as a propeptide. Cystine bridges form between Cys48–Cys63, Cys55–Cys72, Cys62–Cys87, and Cys74–Cys85.

Belongs to the neurotoxin 19 (CSTX) family. 01 subfamily. In terms of tissue distribution, expressed by the venom gland.

Its subcellular location is the secreted. This is U3-lycotoxin-Ls1q from Lycosa singoriensis (Wolf spider).